We begin with the raw amino-acid sequence, 872 residues long: Alanine--tRNA ligase (872 aa).

The Zn(2+) site is built by His-567, His-571, Cys-669, and His-673.

It belongs to the class-II aminoacyl-tRNA synthetase family. It depends on Zn(2+) as a cofactor.

Its subcellular location is the cytoplasm. It catalyses the reaction tRNA(Ala) + L-alanine + ATP = L-alanyl-tRNA(Ala) + AMP + diphosphate. Its function is as follows. Catalyzes the attachment of alanine to tRNA(Ala) in a two-step reaction: alanine is first activated by ATP to form Ala-AMP and then transferred to the acceptor end of tRNA(Ala). Also edits incorrectly charged Ser-tRNA(Ala) and Gly-tRNA(Ala) via its editing domain. The protein is Alanine--tRNA ligase of Streptococcus pyogenes serotype M6 (strain ATCC BAA-946 / MGAS10394).